The chain runs to 105 residues: Large ribosomal subunit protein uL24 (105 aa).

It belongs to the universal ribosomal protein uL24 family. As to quaternary structure, part of the 50S ribosomal subunit.

Functionally, one of two assembly initiator proteins, it binds directly to the 5'-end of the 23S rRNA, where it nucleates assembly of the 50S subunit. One of the proteins that surrounds the polypeptide exit tunnel on the outside of the subunit. The polypeptide is Large ribosomal subunit protein uL24 (Clostridium botulinum (strain Langeland / NCTC 10281 / Type F)).